The chain runs to 300 residues: tRNA dimethylallyltransferase (300 aa).

Position 11 to 18 (11 to 18 (GPTAVGKS)) interacts with ATP. A substrate-binding site is contributed by 13-18 (TAVGKS). Positions 35 to 38 (DSIQ) are interaction with substrate tRNA.

The protein belongs to the IPP transferase family. In terms of assembly, monomer. It depends on Mg(2+) as a cofactor.

The catalysed reaction is adenosine(37) in tRNA + dimethylallyl diphosphate = N(6)-dimethylallyladenosine(37) in tRNA + diphosphate. Its function is as follows. Catalyzes the transfer of a dimethylallyl group onto the adenine at position 37 in tRNAs that read codons beginning with uridine, leading to the formation of N6-(dimethylallyl)adenosine (i(6)A). This is tRNA dimethylallyltransferase from Borrelia duttonii (strain Ly).